Here is a 254-residue protein sequence, read N- to C-terminus: Alcohol dehydrogenase (254 aa).

10-33 contributes to the NAD(+) binding site; that stretch reads FVAGLGGIGLDTSREIVKSGPKNL. Ser-138 contacts substrate. Tyr-151 acts as the Proton acceptor in catalysis.

This sequence belongs to the short-chain dehydrogenases/reductases (SDR) family. As to quaternary structure, homodimer.

It carries out the reaction a primary alcohol + NAD(+) = an aldehyde + NADH + H(+). The enzyme catalyses a secondary alcohol + NAD(+) = a ketone + NADH + H(+). The sequence is that of Alcohol dehydrogenase (Adh1) from Drosophila lacicola (Fruit fly).